The sequence spans 191 residues: Early nodulin-like protein 8 (191 aa).

The signal sequence occupies residues 1–22; the sequence is MGVMSLSKTMVVVVLQVMILLG. The 103-residue stretch at 31–133 folds into the Phytocyanin domain; the sequence is TLYKVGDLDA…YQKLLVSVGT (103 aa). Residues Cys87 and Cys121 are joined by a disulfide bond. N-linked (GlcNAc...) asparagine glycosylation is found at Asn104 and Asn108. Ser165 carries GPI-anchor amidated serine lipidation. A propeptide spans 166-191 (removed in mature form); sequence SASSSLISAFSTVAASLACAVVGAIM.

It belongs to the early nodulin-like (ENODL) family. Mostly expressed in seedlings and roots, and, to a lower extent, in leaves, flowers, stems and seeds.

The protein localises to the cell membrane. Functionally, may act as a carbohydrate transporter. This is Early nodulin-like protein 8 from Arabidopsis thaliana (Mouse-ear cress).